The chain runs to 670 residues: Solute carrier organic anion transporter family member 1A5 (670 aa).

Residues 1 to 20 (MGETEKRVATHEVRCFSKIK) lie on the Cytoplasmic side of the membrane. A helical transmembrane segment spans residues 21 to 40 (MFLLALTWAYVSKSLSGIYM). Over 41–59 (NTMLTQIERQFDIPTSIVG) the chain is Extracellular. Residues 60-80 (FINGSFEIGNLLLIIFVSYFG) form a helical membrane-spanning segment. At 81–86 (TKLHRP) the chain is on the cytoplasmic side. A helical membrane pass occupies residues 87–111 (IMIGVGCVIMGLGCFLMSLPHFLMG). The Extracellular segment spans residues 112 to 155 (RYEYETTISPTSNLSSNSFLCMENRSQTLKPTQDPAECIKEMKS). N-linked (GlcNAc...) asparagine glycans are attached at residues Asn-124 and Asn-135. Residues 156–184 (LMWIYVLVGNIIRGIGETPIMPLGISYIE) form a helical membrane-spanning segment. Topologically, residues 185–203 (DFAKSENSPLYIGILETGK) are cytoplasmic. A helical transmembrane segment spans residues 204–224 (VFGPIVGLLLGSFCASIYVDT). Residues 225–242 (GSVNTDDLTITPTDTRWV) lie on the Extracellular side of the membrane. The chain crosses the membrane as a helical span at residues 243-267 (GAWWIGFLICAGVNILSSIPFFFFP). Topologically, residues 268–311 (KTLPKEGLQDDVDGTNNDKEEKHREKAKEENRGITKDFLPFMKS) are cytoplasmic. Residues 312 to 333 (LSCNPIYMLLILTSVLQINAFI) form a helical membrane-spanning segment. Residues 334 to 353 (NMFTFLPKYLEQQYGKSTAE) are Extracellular-facing. Residues 354–377 (VVLLIGVYNLPPICIGYLLIGFIM) form a helical membrane-spanning segment. Residues 378 to 381 (KKFK) are Cytoplasmic-facing. The helical transmembrane segment at 382 to 405 (ITVKKAAYMAFCLSLFEYLLYFLH) threads the bilayer. Residues 406–513 (FMITCDNFPV…PECANKLQYF (108 aa)) are Extracellular-facing. The region spanning 433-488 (NKVLADCNRGCSCSTNSWDPVCGDNGLAYMSACLAGCKKSVGTGTNMVFQNCSCIR) is the Kazal-like domain. Disulfide bonds link Cys-439-Cys-469, Cys-445-Cys-465, and Cys-454-Cys-486. 2 N-linked (GlcNAc...) asparagine glycosylation sites follow: Asn-483 and Asn-492. The helical transmembrane segment at 514-536 (LIMSVIGSFIYSITAIPGYMVLL) threads the bilayer. Over 537–545 (RCIKPEEKS) the chain is Cytoplasmic. The chain crosses the membrane as a helical span at residues 546 to 571 (LGIGLHAFCTRVFAGIPAPIYFGALI). The Extracellular segment spans residues 572-605 (DRTCLHWGTLKCGEPGACRMYNINNFRRIYLVLP). Residues 606–623 (AALRGSSYLPALFILILM) traverse the membrane as a helical segment. The Cytoplasmic segment spans residues 624-670 (RKFQFPGEIDSSETELAEMKITVKKSECTDVHGSPQVENDGELKTRL).

It belongs to the organo anion transporter (TC 2.A.60) family. In terms of tissue distribution, highly expressed in the kidney, moderately abundant in the retina, and even lower in the liver. Expressed (at protein level) in the small intestine. Expressed at lower levels in brain,lung, and retina.

It is found in the cell membrane. The protein resides in the basal cell membrane. It carries out the reaction taurocholate(out) = taurocholate(in). It catalyses the reaction glycocholate(out) = glycocholate(in). The catalysed reaction is taurochenodeoxycholate(out) = taurochenodeoxycholate(in). The enzyme catalyses tauroursodeoxycholate(out) = tauroursodeoxycholate(in). It carries out the reaction 3,3',5'-triiodo-L-thyronine(out) = 3,3',5'-triiodo-L-thyronine(in). It catalyses the reaction L-thyroxine(out) = L-thyroxine(in). The catalysed reaction is taurodeoxycholate(out) = taurodeoxycholate(in). The enzyme catalyses glycodeoxycholate(out) = glycodeoxycholate(in). It carries out the reaction glycochenodeoxycholate(out) = glycochenodeoxycholate(in). It catalyses the reaction glycoursodeoxycholate(out) = glycoursodeoxycholate(in). The catalysed reaction is estrone 3-sulfate(out) = estrone 3-sulfate(in). The enzyme catalyses prostaglandin E2(out) = prostaglandin E2(in). It carries out the reaction substance P(out) = substance P(in). Its function is as follows. Na(+)-independent transporter that mediates the cellular uptake of a broad range of organic anions such as the endogenous bile salts cholate and deoxycholate, either in their unconjugated or conjugated forms (taurocholate and glycocholate), estrone 3-sulfate and prostaglandin E2, at the plasma membrane. Responsible for intestinal absorption of bile acids. Capable of thyroid hormone transport (both T3 or 3,3',5'-triiodo-L-thyronine, and T4 or L-tyroxine). Plays roles in blood-brain and -cerebrospinal fluid barrier transport of organic anions and signal mediators, and in hormone uptake by neural cells. May also play a role in the reuptake of neuropeptides such as substance P/TAC1 and vasoactive intestinal peptide/VIP released from retinal neurons. Shows a pH-sensitive substrate specificity which may be ascribed to the protonation state of the binding site and leads to a stimulation of substrate transport in an acidic microenvironment. Hydrogencarbonate/HCO3(-) acts as the probable counteranion that exchanges for organic anions. May contribute to regulate the transport of organic compounds in testis across the blood-testis-barrier. The sequence is that of Solute carrier organic anion transporter family member 1A5 (Slco1a5) from Rattus norvegicus (Rat).